Here is a 237-residue protein sequence, read N- to C-terminus: Ribonuclease PH (237 aa).

Residues Arg86 and 124 to 126 (GTR) contribute to the phosphate site.

It belongs to the RNase PH family. In terms of assembly, homohexameric ring arranged as a trimer of dimers.

It carries out the reaction tRNA(n+1) + phosphate = tRNA(n) + a ribonucleoside 5'-diphosphate. Its function is as follows. Phosphorolytic 3'-5' exoribonuclease that plays an important role in tRNA 3'-end maturation. Removes nucleotide residues following the 3'-CCA terminus of tRNAs; can also add nucleotides to the ends of RNA molecules by using nucleoside diphosphates as substrates, but this may not be physiologically important. Probably plays a role in initiation of 16S rRNA degradation (leading to ribosome degradation) during starvation. The sequence is that of Ribonuclease PH from Methylocella silvestris (strain DSM 15510 / CIP 108128 / LMG 27833 / NCIMB 13906 / BL2).